The primary structure comprises 221 residues: Very-long-chain (3R)-3-hydroxyacyl-CoA dehydratase PASTICCINO 2 (221 aa).

At 1 to 11 (MAGFLSVVRRV) the chain is on the cytoplasmic side. Residues 12-32 (YLTLYNWIVFAGWAQVLYLAI) traverse the membrane as a helical segment. The Lumenal portion of the chain corresponds to 33-51 (TTLKETGYENVYDAIEKPL). The helical transmembrane segment at 52-70 (QLAQTAAVLEILHGLVGLV) threads the bilayer. Residues 71–76 (RSPVSA) are Cytoplasmic-facing. A helical transmembrane segment spans residues 77 to 95 (TLPQIGSRLFLTWGILYSF). The Lumenal portion of the chain corresponds to 96–100 (PEVRS). Residues 101-122 (HFLVTSLVISWSITEIIRYSFF) form a helical membrane-spanning segment. Over 123–142 (GFKEALGFAPSWHLWLRYSS) the chain is Cytoplasmic. Residues 143 to 165 (FLLLYPTGITSEVGLIYLALPHI) traverse the membrane as a helical segment. Catalysis depends on residues tyrosine 147 and glutamate 154. The Lumenal segment spans residues 166–184 (KTSEMYSVRMPNILNFSFD). Residues 185 to 204 (FFYATILVLAIYVPGSPHMY) traverse the membrane as a helical segment. Residues 205 to 221 (RYMLGQRKRALSKSKRE) are Cytoplasmic-facing.

This sequence belongs to the very long-chain fatty acids dehydratase HACD family. As to quaternary structure, interacts with CDKA-1; but only with the 'Tyr-15' phosphorylated protein. Interacts with PAS1. Part of the fatty acid elongase complex which contains a beta-ketoacyl-CoA synthase (KCS), a beta-ketoacyl-CoA reductase (KCR), a beta-hydroxyacyl-CoA dehydratase (HCD) and an enoyl-CoA reductase (ECR). In terms of tissue distribution, high expression in young seedlings, roots, root tips, flowers and young siliques. Lower levels in leaves and stems.

It is found in the endoplasmic reticulum membrane. Its subcellular location is the cytoplasm. It localises to the nucleus. It carries out the reaction a very-long-chain (3R)-3-hydroxyacyl-CoA = a very-long-chain (2E)-enoyl-CoA + H2O. It functions in the pathway lipid metabolism; fatty acid biosynthesis. Catalyzes the third of the four reactions of the long-chain fatty acids elongation cycle. This endoplasmic reticulum-bound enzymatic process, allows the addition of two carbons to the chain of long- and very long-chain fatty acids/VLCFAs per cycle. This enzyme catalyzes the dehydration of the 3-hydroxyacyl-CoA intermediate into trans-2,3-enoyl-CoA, within each cycle of fatty acid elongation. Thereby, it participates in the production of VLCFAs of different chain lengths that are involved in multiple biological processes as precursors of membrane lipids and lipid mediators. May be an anti-phosphatase that prevents CDKA-1 dephosphorylation and activation. Involved in the hormonal control of cell division and differentiation. Required for proliferation control of meristematic and non-meristematic cells. Negative regulator of the cell cycle. This chain is Very-long-chain (3R)-3-hydroxyacyl-CoA dehydratase PASTICCINO 2 (PAS2), found in Arabidopsis thaliana (Mouse-ear cress).